Consider the following 233-residue polypeptide: Bcl-2-like protein 1 (233 aa).

The short motif at S4–W24 is the BH4 element. The interval F27–S73 is disordered. Position 49 is a phosphoserine; by PLK3 (S49). S62 carries the phosphoserine; by CDK1 modification. The BH3 motif lies at V86–R100. The short motif at E129 to G148 is the BH1 element. The short motif at P180–Y195 is the BH2 element. A helical membrane pass occupies residues F210–L226.

Belongs to the Bcl-2 family. In terms of assembly, homodimer. Interacts with BCL2L11. Interacts with BAD. Interacts with PGAM5. Interacts with HEBP2. Interacts with p53/TP53 and BBC3; interaction with BBC3 disrupts the interaction with p53/TP53. Interacts with ATP5F1A and ATP5F1B; the interactions mediate the association of isoform Bcl-X(L) with the mitochondrial membrane ATP synthase F(1)F(0) ATP synthase. Interacts with VDAC1. Interacts with BCL2L11 (via BH3). Interacts with RNF183. Interacts with GIMAP3/IAN4 and GIMAP5/IAN5. Interacts with GIMAP5 and HSPA8/HSC70; the interaction between HSPA8 and BCL2L1 is impaired in the absence of GIMAP5. Interacts with isoform 4 of CLU; this interaction releases and activates BAX and promotes cell death. Forms heterodimers with BAX, BAK or BCL2; heterodimerization with BAX does not seem to be required for anti-apoptotic activity. Interacts with isoform 1 of SIVA1; the interaction inhibits the anti-apoptotic activity. Interacts with IKZF3. Interacts with RTL10/BOP. Interacts with DNM1L and CLTA; DNM1L and BCL2L1 isoform BCL-X(L) may form a complex in synaptic vesicles that also contains clathrin and MFF. Interacts (via the loop between motifs BH4 and BH3) with NLRP1 (via LRR repeats), but not with NLRP2, NLRP3, NLRP4, PYCARD, nor MEFV. Interacts with BECN1. Post-translationally, proteolytically cleaved by caspases during apoptosis. The cleaved protein, lacking the BH4 motif, has pro-apoptotic activity. Phosphorylated on Ser-62 by CDK1. This phosphorylation is partial in normal mitotic cells, but complete in G2-arrested cells upon DNA-damage, thus promoting subsequent apoptosis probably by triggering caspases-mediated proteolysis. Phosphorylated by PLK3, leading to regulate the G2 checkpoint and progression to cytokinesis during mitosis. Phosphorylation at Ser-49 appears during the S phase and G2, disappears rapidly in early mitosis during prometaphase, metaphase and early anaphase, and re-appears during telophase and cytokinesis. In terms of processing, ubiquitinated by RNF183 during prolonged ER stress, leading to degradation by the proteosome. Expressed in most tissues. Bcl-X(beta) is specifically expressed in cerebellum, heart, and thymus. In the ovary, the predominant form is Bcl-X(L), with a small but detectable level of Bcl-X(S).

The protein localises to the mitochondrion inner membrane. It localises to the mitochondrion outer membrane. Its subcellular location is the mitochondrion matrix. The protein resides in the cytoplasmic vesicle. It is found in the secretory vesicle. The protein localises to the synaptic vesicle membrane. It localises to the cytoplasm. Its subcellular location is the cytosol. The protein resides in the cytoskeleton. It is found in the microtubule organizing center. The protein localises to the centrosome. It localises to the nucleus membrane. In terms of biological role, potent inhibitor of cell death. Inhibits activation of caspases. Appears to regulate cell death by blocking the voltage-dependent anion channel (VDAC) by binding to it and preventing the release of the caspase activator, CYC1, from the mitochondrial membrane. Also acts as a regulator of G2 checkpoint and progression to cytokinesis during mitosis. Functionally, isoform Bcl-X(L) also regulates presynaptic plasticity, including neurotransmitter release and recovery, number of axonal mitochondria as well as size and number of synaptic vesicle clusters. During synaptic stimulation, increases ATP availability from mitochondria through regulation of mitochondrial membrane ATP synthase F(1)F(0) activity and regulates endocytic vesicle retrieval in hippocampal neurons through association with DMN1L and stimulation of its GTPase activity in synaptic vesicles. May attenuate inflammation impairing NLRP1-inflammasome activation, hence CASP1 activation and IL1B release. Its function is as follows. Isoform Bcl-X(S) promotes apoptosis. This Rattus norvegicus (Rat) protein is Bcl-2-like protein 1 (Bcl2l1).